Reading from the N-terminus, the 714-residue chain is Protein ESC8 (714 aa).

Disordered regions lie at residues 598 to 674 (APTG…ELHN) and 694 to 714 (RQLQDNSREKRSLRRNARKGL). A compositionally biased stretch (polar residues) spans 610-624 (TSSQRRTTVHYSSDV). Acidic residues predominate over residues 628-650 (VSEESENEVDIDVSDDYDSEYLS). Over residues 654–674 (TLTRKGEDRTDKSFGKRELHN) the composition is skewed to basic and acidic residues. A compositionally biased stretch (basic residues) spans 704-714 (RSLRRNARKGL).

In terms of assembly, interacts with GAL11 and SIR2.

The protein localises to the cytoplasm. The protein resides in the nucleus. Functionally, involved in HMR and telomere silencing via the recruitment or stabilizing of the SIR (silent information regulators) complex. The sequence is that of Protein ESC8 (ESC8) from Saccharomyces cerevisiae (strain ATCC 204508 / S288c) (Baker's yeast).